The following is a 542-amino-acid chain: MAAKEVRFHTEAREKMLRGVDILANAVKVTLGPKGRNVVLDKSFGAPRITKDGVTVAKEIELEDKFENMGAQMVREVASKTSDIAGDGTTTATVLAQAIVKEGAKAVASGMNPMDLKRGVDKAVDAVVEELRRNARKVTKNDEIAQVGTISANGDTEIGRFLAEAMEKVGNEGVITVEEAKTAVTELEVVEGMQFDRGYLSPYFVTNPDKMRVELEEPYVLIHEKKLSNLQALLPVLESVVQSGKPLLIIAEDVEGEALATLVVNKLRGGLKVAAVKAPGFGDRRKAMLEDIAILTGGTAISEDLGIKLENVTLDMLGRAKKVVVEKENTTIVDGAGSKTEIEGRVAQIKAQIEETTSDYDREKLQERLAKLAGGVAVIRVGGSTEVEVKERKDRVDDAMHATRAAVEEGVLPGGGVALLRAVKALDRVQTENPDQRHGIEIVRRAIEAPVRQIAENAGAEGSIIVGKLREKTEFGYGWNAQTNEFGDLFEQGVIDPVKVVRTALQDAASVAGLLITTEAMVAEKPKKEAPVPPMPPGGMDF.

Residues 30–33 (TLGP), Lys51, 87–91 (DGTTT), Gly415, and Asp496 contribute to the ATP site.

This sequence belongs to the chaperonin (HSP60) family. As to quaternary structure, forms a cylinder of 14 subunits composed of two heptameric rings stacked back-to-back. Interacts with the co-chaperonin GroES.

The protein resides in the cytoplasm. The catalysed reaction is ATP + H2O + a folded polypeptide = ADP + phosphate + an unfolded polypeptide.. In terms of biological role, together with its co-chaperonin GroES, plays an essential role in assisting protein folding. The GroEL-GroES system forms a nano-cage that allows encapsulation of the non-native substrate proteins and provides a physical environment optimized to promote and accelerate protein folding. This is Chaperonin GroEL 2 from Sinorhizobium fredii (strain NBRC 101917 / NGR234).